The following is a 283-amino-acid chain: Gap junction beta-1 protein (283 aa).

The Cytoplasmic segment spans residues 1–22 (MNWTGLYTLLSGVNRHSTAIGR). A helical membrane pass occupies residues 23-45 (VWLSVIFIFRIMVLVVAAESVWG). At 46-75 (DEKSSFICNTLQPGCNSVCYDHFFPISHVR) the chain is on the extracellular side. Residues 76-95 (LWSLQLILVSTPALLVAMHV) traverse the membrane as a helical segment. Over 96-130 (AHQQHIEKKMLRLEGHGDPLHLEEVKRHKVHISGT) the chain is Cytoplasmic. The chain crosses the membrane as a helical span at residues 131-153 (LWWTYVISVVFRLLFEAVFMYVF). Residues 154 to 191 (YLLYPGYAMVRLVKCEAFPCPNTVDCFVSRPTEKTVFT) are Extracellular-facing. Residues 192-214 (VFMLAASGICIILNVAEVVYLII) form a helical membrane-spanning segment. Residues 215–283 (RACARRAQRR…AEKSDRCSAC (69 aa)) are Cytoplasmic-facing. Phosphoserine is present on residues Ser233, Ser258, Ser266, and Ser277.

This sequence belongs to the connexin family. Beta-type (group I) subfamily. In terms of assembly, a connexon is composed of a hexamer of connexins. Interacts with CNST.

It is found in the cell membrane. The protein localises to the cell junction. Its subcellular location is the gap junction. Its function is as follows. One gap junction consists of a cluster of closely packed pairs of transmembrane channels, the connexons, through which materials of low MW diffuse from one cell to a neighboring cell. This chain is Gap junction beta-1 protein (Gjb1), found in Mus musculus (Mouse).